A 598-amino-acid polypeptide reads, in one-letter code: Probable pectinesterase/pectinesterase inhibitor 34 (598 aa).

The disordered stretch occupies residues 1–40 (MGYERLGPSGATGSVTTSTTTAPILNQVSTSEQPENNNRR). A compositionally biased stretch (low complexity) spans 7 to 23 (GPSGATGSVTTSTTTAP). The segment covering 24 to 36 (ILNQVSTSEQPEN) has biased composition (polar residues). A helical membrane pass occupies residues 46–66 (VVSSIVLAISLILAAAIFAGV). Residues 81 to 232 (RKPSQAISKA…SELVSNCLAI (152 aa)) are pectinesterase inhibitor 34. The tract at residues 284 to 582 (DIIVSKDGNG…FTVAEFIYGS (299 aa)) is pectinesterase 34. Substrate-binding residues include Thr-360 and Gln-390. Asp-413 functions as the Proton donor; for pectinesterase activity in the catalytic mechanism. Residues Cys-427 and Cys-447 are joined by a disulfide bond. The Nucleophile; for pectinesterase activity role is filled by Asp-434. Substrate contacts are provided by Arg-502 and Trp-504.

This sequence in the N-terminal section; belongs to the PMEI family. In the C-terminal section; belongs to the pectinesterase family. Expressed in siliques.

It localises to the membrane. The enzyme catalyses [(1-&gt;4)-alpha-D-galacturonosyl methyl ester](n) + n H2O = [(1-&gt;4)-alpha-D-galacturonosyl](n) + n methanol + n H(+). It participates in glycan metabolism; pectin degradation; 2-dehydro-3-deoxy-D-gluconate from pectin: step 1/5. Its function is as follows. Acts in the modification of cell walls via demethylesterification of cell wall pectin. This Arabidopsis thaliana (Mouse-ear cress) protein is Probable pectinesterase/pectinesterase inhibitor 34 (PME34).